The chain runs to 435 residues: 5-methylthioadenosine/S-adenosylhomocysteine deaminase (435 aa).

Residues His-65 and His-67 each contribute to the Zn(2+) site. Glu-94, Arg-150, and His-189 together coordinate substrate. His-216 is a binding site for Zn(2+). Substrate contacts are provided by Glu-219 and Asp-304. Asp-304 is a Zn(2+) binding site.

This sequence belongs to the metallo-dependent hydrolases superfamily. MTA/SAH deaminase family. Zn(2+) is required as a cofactor.

It catalyses the reaction S-adenosyl-L-homocysteine + H2O + H(+) = S-inosyl-L-homocysteine + NH4(+). It carries out the reaction S-methyl-5'-thioadenosine + H2O + H(+) = S-methyl-5'-thioinosine + NH4(+). Its function is as follows. Catalyzes the deamination of 5-methylthioadenosine and S-adenosyl-L-homocysteine into 5-methylthioinosine and S-inosyl-L-homocysteine, respectively. Is also able to deaminate adenosine. This Bacillus cereus (strain G9842) protein is 5-methylthioadenosine/S-adenosylhomocysteine deaminase.